The sequence spans 148 residues: Protein F15 (148 aa).

This sequence belongs to the poxviridae F15 protein family.

The protein is Protein F15 of Fowlpox virus (strain NVSL) (FPV).